The following is a 249-amino-acid chain: NAD(P)H-quinone oxidoreductase subunit T, chloroplastic (249 aa).

The transit peptide at 1-45 (MAYATSTYARTSCIILPKIQNGAHFTDDTKAFRRITARRVTRIYA) directs the protein to the chloroplast. The tract at residues 44 to 84 (YASQGPTKPSKPSPGVDTRIHWESPDEGWIGGRSDPAKSVD) is disordered. Residues 106–172 (SHYQFLGVST…ETRRFYDWTL (67 aa)) form the J domain. A helical membrane pass occupies residues 224–244 (LTFDILIVLFAVCCIAFVIVF).

In terms of assembly, part of the chloroplast NDH complex, composed of a mixture of chloroplast and nucleus encoded subunits. Component of the electron donor-binding subcomplex, at least composed of NDHS, NDHT and NDHU.

The protein localises to the plastid. It localises to the chloroplast thylakoid membrane. The enzyme catalyses a plastoquinone + NADH + (n+1) H(+)(in) = a plastoquinol + NAD(+) + n H(+)(out). It carries out the reaction a plastoquinone + NADPH + (n+1) H(+)(in) = a plastoquinol + NADP(+) + n H(+)(out). Functionally, NDH shuttles electrons from NAD(P)H:plastoquinone, via FMN and iron-sulfur (Fe-S) centers, to quinones in the photosynthetic chain and possibly in a chloroplast respiratory chain. The immediate electron acceptor for the enzyme in this species is believed to be plastoquinone. Couples the redox reaction to proton translocation, and thus conserves the redox energy in a proton gradient. Required for the accumulation of both the NDH subcomplex A and NDHS. In Arabidopsis thaliana (Mouse-ear cress), this protein is NAD(P)H-quinone oxidoreductase subunit T, chloroplastic.